The chain runs to 491 residues: Acetyl-coenzyme A carboxylase carboxyl transferase subunit beta, chloroplastic (491 aa).

The disordered stretch occupies residues 28–56 (LGPIENTSESEDPNRNDMKKNSHSWGSRD). Residues 223–491 (LWVQCENCYG…FPLNKNSIEH (269 aa)) enclose the CoA carboxyltransferase N-terminal domain. Cys-227, Cys-230, Cys-246, and Cys-249 together coordinate Zn(2+). The segment at 227 to 249 (CENCYGLNYKKILKSKMNLCEQC) adopts a C4-type zinc-finger fold.

It belongs to the AccD/PCCB family. In terms of assembly, acetyl-CoA carboxylase is a heterohexamer composed of biotin carboxyl carrier protein, biotin carboxylase and 2 subunits each of ACCase subunit alpha and ACCase plastid-coded subunit beta (accD). Zn(2+) serves as cofactor.

Its subcellular location is the plastid. It localises to the chloroplast stroma. The enzyme catalyses N(6)-carboxybiotinyl-L-lysyl-[protein] + acetyl-CoA = N(6)-biotinyl-L-lysyl-[protein] + malonyl-CoA. The protein operates within lipid metabolism; malonyl-CoA biosynthesis; malonyl-CoA from acetyl-CoA: step 1/1. In terms of biological role, component of the acetyl coenzyme A carboxylase (ACC) complex. Biotin carboxylase (BC) catalyzes the carboxylation of biotin on its carrier protein (BCCP) and then the CO(2) group is transferred by the transcarboxylase to acetyl-CoA to form malonyl-CoA. In Daucus carota (Wild carrot), this protein is Acetyl-coenzyme A carboxylase carboxyl transferase subunit beta, chloroplastic.